Consider the following 359-residue polypeptide: DNA polymerase IV (359 aa).

In terms of domain architecture, UmuC spans 4–185 (IIHIDMDCYF…LPLSKIPGVG (182 aa)). Positions 8 and 103 each coordinate Mg(2+). The active site involves Glu-104.

This sequence belongs to the DNA polymerase type-Y family. Monomer. The cofactor is Mg(2+).

The protein localises to the cytoplasm. The enzyme catalyses DNA(n) + a 2'-deoxyribonucleoside 5'-triphosphate = DNA(n+1) + diphosphate. Functionally, poorly processive, error-prone DNA polymerase involved in untargeted mutagenesis. Copies undamaged DNA at stalled replication forks, which arise in vivo from mismatched or misaligned primer ends. These misaligned primers can be extended by PolIV. Exhibits no 3'-5' exonuclease (proofreading) activity. May be involved in translesional synthesis, in conjunction with the beta clamp from PolIII. The chain is DNA polymerase IV from Shewanella frigidimarina (strain NCIMB 400).